Consider the following 773-residue polypeptide: Ergothioneine biosynthesis protein 1 (773 aa).

The segment at 16–322 (PESIEQSLKR…ESTIADYSTY (307 aa)) is L-histidine N(alpha)-methyltransferase. Y51 contributes to the L-histidine binding site. Residues G85, K91, D112, and 142–143 (CF) each bind S-adenosyl-L-methionine. L-histidine is bound by residues N172, Y212, and 287 to 289 (EES). The interval 347-772 (ALRKVWLFIT…YAWIGARLVK (426 aa)) is hercynylcysteine S-oxide synthase. Fe cation is bound by residues H382, H476, and H480.

This sequence in the N-terminal section; belongs to the methyltransferase superfamily. EgtD family. It in the C-terminal section; belongs to the EgtB family. Fe(2+) is required as a cofactor.

It is found in the cytoplasm. Its subcellular location is the nucleus. It catalyses the reaction L-histidine + 3 S-adenosyl-L-methionine = hercynine + 3 S-adenosyl-L-homocysteine + 3 H(+). The enzyme catalyses hercynine + L-cysteine + O2 = S-(hercyn-2-yl)-L-cysteine S-oxide + H2O. It functions in the pathway amino-acid biosynthesis; ergothioneine biosynthesis. In terms of biological role, catalyzes the SAM-dependent triple methylation of the alpha-amino group of histidine to form hercynine and subsequent conjugation with cysteine and oxygen to form hercynylcysteine sulfoxide, the first two steps in the biosynthesis pathway of ergothioneine. May play a role in meiosis. This Schizosaccharomyces pombe (strain 972 / ATCC 24843) (Fission yeast) protein is Ergothioneine biosynthesis protein 1.